The primary structure comprises 448 residues: Metacaspase-1 (448 aa).

The interval 1 to 129 is disordered; that stretch reads MFPGQGRHTY…GHYSRPPTDS (129 aa). Positions 10–44 are enriched in low complexity; that stretch reads YGGQQSNYSNQQQGYDQGYNQGYGQAYGQEYNQGY. Residues 61–70 show a composition bias toward pro residues; sequence SGPPPGPPPG. A compositionally biased stretch (polar residues) spans 99-114; that stretch reads YGNNQTRGSGNEQNYG. Residues histidine 231 and cysteine 292 contribute to the active site.

This sequence belongs to the peptidase C14B family.

Involved in cell death (apoptosis). The sequence is that of Metacaspase-1 (MCA1) from Candida albicans (strain SC5314 / ATCC MYA-2876) (Yeast).